Consider the following 287-residue polypeptide: Protein-export membrane protein SecF (287 aa).

The next 6 membrane-spanning stretches (helical) occupy residues 21–41 (LIAIPAAITVIALLLVVFNGL), 129–149 (QIYWAIGFAFLFMSVTVFIIF), 158–178 (VILAAASDIIIAVGGMSLFGI), 182–202 (LASVGAILMLIGYSVDTDILL), 226–246 (VTMSIAAIASMAALYLVTVFV), and 259–279 (VLIIGLLADILTTWLMNLGIL).

The protein belongs to the SecD/SecF family. SecF subfamily. As to quaternary structure, part of the protein translocation apparatus. Forms a complex with SecD.

The protein resides in the cell membrane. Its function is as follows. Involved in protein export. In Methanothermobacter thermautotrophicus (strain ATCC 29096 / DSM 1053 / JCM 10044 / NBRC 100330 / Delta H) (Methanobacterium thermoautotrophicum), this protein is Protein-export membrane protein SecF.